The chain runs to 64 residues: Small ribosomal subunit protein eS17 (64 aa).

This sequence belongs to the eukaryotic ribosomal protein eS17 family.

The protein is Small ribosomal subunit protein eS17 of Natronomonas pharaonis (strain ATCC 35678 / DSM 2160 / CIP 103997 / JCM 8858 / NBRC 14720 / NCIMB 2260 / Gabara) (Halobacterium pharaonis).